Consider the following 301-residue polypeptide: Multifunctional dioxygenase prhA (301 aa).

Positions 130, 132, and 214 each coordinate Fe cation.

It belongs to the PhyH family. As to quaternary structure, homodimer. Fe cation is required as a cofactor.

It carries out the reaction preaustinoid A1 + 2-oxoglutarate + O2 = berkeleyone B + succinate + CO2 + H2O. It catalyses the reaction berkeleyone B + 2-oxoglutarate + O2 = berkeleydione + succinate + CO2 + H2O. The enzyme catalyses preaustinoid A + 2 2-oxoglutarate + 2 O2 = berkeleytrione + 2 succinate + 2 CO2 + H2O. Its pathway is secondary metabolite biosynthesis; terpenoid biosynthesis. Functionally, multifunctional dioxygenase; part of the gene cluster that mediates the biosynthesis of paraherquonin, a meroterpenoid with a unique, highly congested hexacyclic molecular architecture. The first step of the pathway is the synthesis of 3,5-dimethylorsellinic acid (DMOA) by the polyketide synthase prhL. Synthesis of DMOA is followed by farnesylation by the prenyltransferase prhE, methylesterification by the methyl-transferase prhM, epoxidation of the prenyl chain by the flavin-dependent monooxygenase prhF, and cyclization of the farnesyl moiety by the terpene cyclase prhH, to yield the tetracyclic intermediate, protoaustinoid A. The short chain dehydrogenase prhI then oxidizes the C-3 alcohol group of the terpene cyclase product to transform protoaustinoid A into protoaustinoid B. The FAD-binding monooxygenase prhJ catalyzes the oxidation of protoaustinoid B into preaustinoid A which is further oxidized into preaustinoid A1 by FAD-binding monooxygenase phrK. Finally, prhA leads to berkeleydione via the berkeleyone B intermediate. PrhA is a multifunctional dioxygenase that first desaturates at C5-C6 to form berkeleyone B, followed by rearrangement of the A/B-ring to form the cycloheptadiene moiety in berkeleydione. Berkeleydione serves as the key intermediate for the biosynthesis of paraherquonin as well as many other meroterpenoids. The cytochrome P450 monooxygenases prhB, prhD, and prhN, as well as the isomerase prhC, are probably involved in the late stage of paraherquonin biosynthesis, after the production of berkeleydione. Especially prhC might be a multifunctional enzyme that catalyzes the D-ring expansion via intramolecular methoxy rearrangement, as well as the hydrolysis of the expanded D-ring. The protein is Multifunctional dioxygenase prhA of Penicillium brasilianum.